A 620-amino-acid chain; its full sequence is Ferric/cupric reductase transmembrane component 7 (620 aa).

Residues 1-45 are Extracellular-facing; it reads MIEERDLVLSNGIHCIADIHSELYARLKKESQAATPWVYQKQYGK. The helical transmembrane segment at 46–66 threads the bilayer; that stretch reads FVTYFVAVIIFLSLIKKLAFM. Residues 67–107 lie on the Cytoplasmic side of the membrane; sequence YYDSSEEFLPEKKNSPTTPSVFLARIMTKLVAFNRYICYRK. A helical transmembrane segment spans residues 108–128; it reads FPTLIFSYLGIPTSVGTFLVV. At 129 to 167 the chain is on the extracellular side; that stretch reads MATTLYTLLYCFVPHPFYRPCAGFGSPPLSVRAGIMAIS. One can recognise a Ferric oxidoreductase domain in the interval 161–320; that stretch reads AGIMAISLVP…LAVKGYLRPG (160 aa). The chain crosses the membrane as a helical span at residues 168 to 188; the sequence is LVPFVFSLSGKINVIGWLVGL. Over 189-194 the chain is Cytoplasmic; it reads SYEKIN. The helical transmembrane segment at 195–215 threads the bilayer; the sequence is IYHQWASILCLFFSWVHVIPF. Histidine 197 and histidine 211 together coordinate heme. Residues 216 to 237 are Extracellular-facing; that stretch reads LRQARHEGGYERMHQRWKASDM. The helical transmembrane segment at 238-258 threads the bilayer; sequence WRSGVPPILFLNLLWLSSLPI. At 259–265 the chain is on the cytoplasmic side; that stretch reads ARRHFYE. Residues 266 to 286 form a helical membrane-spanning segment; it reads IFLQLHWILAVGFYISLFYHV. Heme is bound by residues histidine 271 and histidine 285. Topologically, residues 287–292 are extracellular; that stretch reads YPELNS. The helical transmembrane segment at 293–313 threads the bilayer; the sequence is HMYLVATIVVWFAQLFYRLAV. The Cytoplasmic portion of the chain corresponds to 314 to 620; the sequence is KGYLRPGRSF…CYLHSESFGY (307 aa). Residues 321–419 enclose the FAD-binding FR-type domain; sequence RSFMASTIAN…DGPYGGIERD (99 aa). An FAD-binding site is contributed by 369 to 375; that stretch reads HPFSIFP. NADP(+) is bound at residue 411-414; that stretch reads GPYG. Positions 519-543 are disordered; the sequence is SDQSDLAKREKDTEFGQDDTESNST. A compositionally biased stretch (basic and acidic residues) spans 523–532; the sequence is DLAKREKDTE. Residue 578-579 participates in NADP(+) binding; that stretch reads CF.

It belongs to the ferric reductase (FRE) family. The cofactor is FAD.

It localises to the cell membrane. It catalyses the reaction 2 a Fe(II)-siderophore + NADP(+) + H(+) = 2 a Fe(III)-siderophore + NADPH. Cell surface metalloreductase. May be involved in copper homeostasis. This Saccharomyces cerevisiae (strain ATCC 204508 / S288c) (Baker's yeast) protein is Ferric/cupric reductase transmembrane component 7 (FRE7).